We begin with the raw amino-acid sequence, 235 residues long: Proteasome subunit alpha type-2-B (235 aa).

Lys-64 is covalently cross-linked (Glycyl lysine isopeptide (Lys-Gly) (interchain with G-Cter in ubiquitin)).

This sequence belongs to the peptidase T1A family. Component of the 20S core complex of the 26S proteasome. The 26S proteasome is composed of a core protease (CP), known as the 20S proteasome, capped at one or both ends by the 19S regulatory particle (RP/PA700). The 20S proteasome core is composed of 28 subunits that are arranged in four stacked rings, resulting in a barrel-shaped structure. The two end rings are each formed by seven alpha subunits, and the two central rings are each formed by seven beta subunits. The catalytic chamber with the active sites is on the inside of the barrel.

Its subcellular location is the cytoplasm. It is found in the nucleus. The proteasome is a multicatalytic proteinase complex which is characterized by its ability to cleave peptides with Arg, Phe, Tyr, Leu, and Glu adjacent to the leaving group at neutral or slightly basic pH. The proteasome has an ATP-dependent proteolytic activity. The chain is Proteasome subunit alpha type-2-B (PAB2) from Arabidopsis thaliana (Mouse-ear cress).